A 443-amino-acid chain; its full sequence is Chromosomal replication initiator protein DnaA (443 aa).

The tract at residues 1–75 is domain I, interacts with DnaA modulators; that stretch reads MNTQLNEIWQ…AIKQVTFKEY (75 aa). The domain II stretch occupies residues 75 to 105; the sequence is YEIAFIVPSQENLNKLTKQTESAGNEDSPLS. Positions 106–321 are domain III, AAA+ region; it reads VLNPKYTFDT…GALNRVIAYS (216 aa). Residues Gly150, Gly152, Lys153, and Thr154 each coordinate ATP. The interval 322 to 443 is domain IV, binds dsDNA; sequence SLTENEITVE…SEIKRNLLGK (122 aa).

Belongs to the DnaA family. Oligomerizes as a right-handed, spiral filament on DNA at oriC.

It is found in the cytoplasm. Functionally, plays an essential role in the initiation and regulation of chromosomal replication. ATP-DnaA binds to the origin of replication (oriC) to initiate formation of the DNA replication initiation complex once per cell cycle. Binds the DnaA box (a 9 base pair repeat at the origin) and separates the double-stranded (ds)DNA. Forms a right-handed helical filament on oriC DNA; dsDNA binds to the exterior of the filament while single-stranded (ss)DNA is stabiized in the filament's interior. The ATP-DnaA-oriC complex binds and stabilizes one strand of the AT-rich DNA unwinding element (DUE), permitting loading of DNA polymerase. After initiation quickly degrades to an ADP-DnaA complex that is not apt for DNA replication. Binds acidic phospholipids. The chain is Chromosomal replication initiator protein DnaA from Acetivibrio thermocellus (strain ATCC 27405 / DSM 1237 / JCM 9322 / NBRC 103400 / NCIMB 10682 / NRRL B-4536 / VPI 7372) (Clostridium thermocellum).